Consider the following 187-residue polypeptide: Elongation factor P (187 aa).

Belongs to the elongation factor P family.

The protein localises to the cytoplasm. Its pathway is protein biosynthesis; polypeptide chain elongation. Involved in peptide bond synthesis. Stimulates efficient translation and peptide-bond synthesis on native or reconstituted 70S ribosomes in vitro. Probably functions indirectly by altering the affinity of the ribosome for aminoacyl-tRNA, thus increasing their reactivity as acceptors for peptidyl transferase. This Leifsonia xyli subsp. xyli (strain CTCB07) protein is Elongation factor P.